Here is an 89-residue protein sequence, read N- to C-terminus: Small ribosomal subunit protein uS15 (89 aa).

This sequence belongs to the universal ribosomal protein uS15 family. As to quaternary structure, part of the 30S ribosomal subunit. Forms a bridge to the 50S subunit in the 70S ribosome, contacting the 23S rRNA.

Its function is as follows. One of the primary rRNA binding proteins, it binds directly to 16S rRNA where it helps nucleate assembly of the platform of the 30S subunit by binding and bridging several RNA helices of the 16S rRNA. Forms an intersubunit bridge (bridge B4) with the 23S rRNA of the 50S subunit in the ribosome. The polypeptide is Small ribosomal subunit protein uS15 (Thermomicrobium roseum (strain ATCC 27502 / DSM 5159 / P-2)).